Reading from the N-terminus, the 305-residue chain is Heat stress transcription factor B-4d (305 aa).

Positions 201-230 (LRRRNSLLLSELAHMRKLYNDIIYFLQNHV) are hydrophobic repeat HR-A/B. The Nuclear localization signal motif lies at 286-289 (KKRR). A disordered region spans residues 286–305 (KKRRVQLVQEDEGDEQGSEG). Residues 294-305 (QEDEGDEQGSEG) show a composition bias toward acidic residues.

Belongs to the HSF family. Class B subfamily. As to quaternary structure, homotrimer. Exhibits temperature-dependent phosphorylation.

Its subcellular location is the nucleus. Its function is as follows. Transcriptional regulator that specifically binds DNA of heat shock promoter elements (HSE). The polypeptide is Heat stress transcription factor B-4d (HSFB4D) (Oryza sativa subsp. japonica (Rice)).